The chain runs to 65 residues: Vespid chemotactic peptide 5h (65 aa).

Positions Met1–Ala23 are cleaved as a signal peptide. 7 AXPX repeats span residues Ala23 to Ala26, Ala27 to Leu30, Ala31 to Gly34, Ala35 to Asp38, Ala39 to Asn42, Ala43 to Leu46, and Ala47 to Phe50. The propeptide occupies Ala24–Pro49. The residue at position 62 (Leu62) is a Leucine amide.

It belongs to the MCD family. Crabrolin subfamily. Expressed by the venom gland.

The protein resides in the secreted. Its function is as follows. Shows antimicrobial activity against the Gram-negative bacteria E.coli ATCC 25922 (MIC=30 ug/ml), the Gram-positive bacteria S.aureus ATCC 2592 (MIC=5 ug/ml) and the fungus C.albicans ATCC 2002 (MIC=25 ug/ml). Acts as a mast cell degranulating peptide. Its mast cell degranulation activity may be related to the activation of G-protein coupled receptors in mast cells as well as interaction with other proteins located in cell endosomal membranes in the mast cells. Induces the chemotaxis of neutrophils. The sequence is that of Vespid chemotactic peptide 5h from Vespa magnifica (Hornet).